A 627-amino-acid polypeptide reads, in one-letter code: DNA topoisomerase 4 subunit B (627 aa).

ATP contacts are provided by residues Tyr4, Asn41, Asp68, 109–115, and Lys333; that span reads GLHGVGV. The region spanning 412 to 525 is the Toprim domain; it reads TELFIVEGDS…NGHIYIAQPP (114 aa). Mg(2+) is bound by residues Glu418, Asp490, and Asp492.

This sequence belongs to the type II topoisomerase family. ParE type 1 subfamily. As to quaternary structure, heterotetramer composed of ParC and ParE. Mg(2+) is required as a cofactor. Mn(2+) serves as cofactor. The cofactor is Ca(2+).

It catalyses the reaction ATP-dependent breakage, passage and rejoining of double-stranded DNA.. Pyrrolopyrimidines inhibit both GyrB and its paralog in topoisomerase IV (parE). Its function is as follows. Topoisomerase IV is essential for chromosome segregation. It relaxes supercoiled DNA. Performs the decatenation events required during the replication of a circular DNA molecule. This is DNA topoisomerase 4 subunit B from Francisella tularensis subsp. holarctica (strain LVS).